Consider the following 64-residue polypeptide: Large ribosomal subunit protein bL33 (64 aa).

This sequence belongs to the bacterial ribosomal protein bL33 family.

In Synechococcus sp. (strain JA-3-3Ab) (Cyanobacteria bacterium Yellowstone A-Prime), this protein is Large ribosomal subunit protein bL33.